The chain runs to 174 residues: UPF0200 protein PAE1629 (174 aa).

9-16 lines the ATP pocket; that stretch reads GLPGSGKT.

Belongs to the UPF0200 family.

The chain is UPF0200 protein PAE1629 from Pyrobaculum aerophilum (strain ATCC 51768 / DSM 7523 / JCM 9630 / CIP 104966 / NBRC 100827 / IM2).